The sequence spans 194 residues: Orotate phosphoribosyltransferase (194 aa).

5-phospho-alpha-D-ribose 1-diphosphate is bound by residues Arg-102, Lys-103, Lys-106, His-108, and 129 to 137; that span reads EDVVTTGGS. 2 residues coordinate orotate: Thr-133 and Arg-161.

It belongs to the purine/pyrimidine phosphoribosyltransferase family. PyrE subfamily. As to quaternary structure, homodimer. Requires Mg(2+) as cofactor.

It carries out the reaction orotidine 5'-phosphate + diphosphate = orotate + 5-phospho-alpha-D-ribose 1-diphosphate. It functions in the pathway pyrimidine metabolism; UMP biosynthesis via de novo pathway; UMP from orotate: step 1/2. Its function is as follows. Catalyzes the transfer of a ribosyl phosphate group from 5-phosphoribose 1-diphosphate to orotate, leading to the formation of orotidine monophosphate (OMP). The sequence is that of Orotate phosphoribosyltransferase from Prochlorococcus marinus (strain MIT 9211).